The sequence spans 368 residues: Endophilin-A2 (368 aa).

Residues 1–21 (MSVAGLKKQFYKASQLVSEKV) are membrane-binding amphipathic helix. The BAR domain maps to 18-249 (SEKVGGAEGT…LKRRVREASS (232 aa)). Residues 60 to 87 (PNPASRAKLTMLNTVSKIRGQVKNPGYP) are required for dimerization upon membrane association. Residues 180–250 (DEELRQALEK…KRRVREASSR (71 aa)) adopt a coiled-coil conformation. Residues 218–254 (LVDAQLDYHRQAVQILEELADKLKRRVREASSRPRRE) form an interaction with ARC region. The disordered stretch occupies residues 243-309 (RVREASSRPR…SKSMPPLDQP (67 aa)). Residues 245 to 261 (REASSRPRREFKPRPQE) are compositionally biased toward basic and acidic residues. Ser-288 bears the Phosphoserine mark. At Thr-298 the chain carries Phosphothreonine. In terms of domain architecture, SH3 spans 306–365 (LDQPSCKALYDFEPENDGELGFREGDLITLTNQIDENWYEGMLHGQSGFFPLSYVQVLVP). Tyr-315 bears the Phosphotyrosine mark.

It belongs to the endophilin family. In terms of assembly, interacts with ARC, SYNJ1 and DNM1. Interacts with PDCD6IP. Interacts with BIN2. In terms of tissue distribution, detected in brain and testis (at protein level). Ubiquitous.

The protein resides in the cytoplasm. It is found in the early endosome membrane. Its subcellular location is the cell projection. It localises to the podosome. Its function is as follows. Implicated in endocytosis. May recruit other proteins to membranes with high curvature. The sequence is that of Endophilin-A2 (Sh3gl1) from Rattus norvegicus (Rat).